A 610-amino-acid polypeptide reads, in one-letter code: Prolactin receptor (610 aa).

Positions 1-19 (MPSALAFVLLVLNISLLKG) are cleaved as a signal peptide. The Extracellular portion of the chain corresponds to 20-229 (QSPPGKPEIH…EMPNDFTLKD (210 aa)). 2 consecutive Fibronectin type-III domains span residues 22–122 (PPGK…IVEP) and 124–224 (PPRN…MPND). C31 and C41 form a disulfide bridge. An N-linked (GlcNAc...) asparagine glycan is attached at N54. C70 and C81 are joined by a disulfide. N-linked (GlcNAc...) asparagine glycosylation is found at N99 and N127. 2 residues coordinate Zn(2+): D206 and H207. Positions 210–214 (WSRWS) match the WSXWS motif motif. The chain crosses the membrane as a helical span at residues 230-253 (TTVWIIVAILSAVICLIMVWAVAL). At 254–610 (KGYSMMTCIF…DPTCFMHSFH (357 aa)) the chain is on the cytoplasmic side. The Box 1 motif motif lies at 262-270 (IFPPVPGPK). Disordered stretches follow at residues 317–355 (DERL…HSLL), 458–482 (TGEE…TPWP), and 564–584 (AKKA…ASFT). Residues 318 to 327 (ERLMPSHSKE) are compositionally biased toward basic and acidic residues. Positions 345-354 (GHGSYDSHSL) are enriched in low complexity.

This sequence belongs to the type I cytokine receptor family. Type 1 subfamily. In terms of assembly, interacts with SMARCA1. Interacts with NEK3 and VAV2 and this interaction is prolactin-dependent.

It localises to the membrane. Functionally, this is a receptor for the anterior pituitary hormone prolactin. This Rattus norvegicus (Rat) protein is Prolactin receptor (Prlr).